The primary structure comprises 767 residues: MASANFIRQFELGNDSFSYQKRPEDEPSQPLSNRNINKLNDSSTLKDSSSRIFINSQVLRDGRPVELYAVECSGMKYMELSCGDNVALRRCPDSYFNISQILRLAGTSSSENAKELDDIIESGDYENVDSKHPQIDGVWVPYDRAISIAKRYGVYEILQPLISFNLDLFPKFSKQQQIESSSISKNLNTSSFNTRSPLRNHNFSNPSKSSKNGVHTINNMQSSPSPSSSFLLPLTQIDSQNVKRSNNYLSTSPPILEQRLKRHRIDVSDEDLHPSSQLNDNEASSLFPDTPRLNHSLSFVSLVSSLPPLDQNIMQDYHTSKDILTSIFLDVNFADSSALEAKLSDSLDLDVPIDELGHAALHWAAAVAKMPLLQALIHKGANPLRGNLTGETALMRSVLVTNHLNQNSFGDLLDLLYASLPCTDRAGRTVVHHICLTAGIKGRGSASRYYLETLLNWAKKHASGNNGYMLKDFINYLNHQDKNGDTALNIAARIGNKNIVEVLMQAGASAYIPNRAGLSVANFGIFVENALKQPEDSKQTKVSLMSENLSSKEKTAVPPRQKSRDIIASVTDVISSLDKDFQDEMAAKQSMIDSAYTQLRESTKKLSDLREQLHVSETQRTLFLELRQRCKNLMTSIEEQKSELSNLYESFDPNGIHDSLSLDADAPFTVNENNNKNLSIAELKFQVAAYERNEARLNELANKLWQRNSNIKSKCRRVVSLCTGVDESRVDSLLESLLQAVESDGQQGEVDMGRVAGFLRVVKEHQA.

Residues 17–44 form a disordered region; it reads FSYQKRPEDEPSQPLSNRNINKLNDSST. A compositionally biased stretch (polar residues) spans 29-44; sequence QPLSNRNINKLNDSST. One can recognise an HTH APSES-type domain in the interval 66 to 173; it reads ELYAVECSGM…FNLDLFPKFS (108 aa). Residues 98-119 constitute a DNA-binding region (H-T-H motif); the sequence is ISQILRLAGTSSSENAKELDDI. Positions 189 to 230 are disordered; that stretch reads TSSFNTRSPLRNHNFSNPSKSSKNGVHTINNMQSSPSPSSSF. Over residues 192-221 the composition is skewed to polar residues; that stretch reads FNTRSPLRNHNFSNPSKSSKNGVHTINNMQ. S252 is subject to Phosphoserine. Residues 261-264 carry the Nuclear localization signal motif; sequence KRHR. 2 ANK repeats span residues 356–385 and 483–512; these read LGHA…NPLR and NGDT…SAYI. The disordered stretch occupies residues 542 to 562; it reads VSLMSENLSSKEKTAVPPRQK.

In terms of assembly, DSC1 contains cdc10 and sct1/res1. Interacts with pol5.

Its subcellular location is the nucleus. Its function is as follows. Major component of the cell cycle transcription factor complex MBF (MCB binding factor, also known as DSC1), that controls G1-S phase specific gene expression. Involved in the control of rRNA production, via interaction with pol5. May be involved in the transcriptional regulation of the cdc22 and cdt1 genes. In fission yeast, two genes, cdc10 and cdc2, are required for the cell cycle control called start, the point early in the G1 phase at which cells become committed to the mitotic cycle. The polypeptide is Start control protein cdc10 (cdc10) (Schizosaccharomyces pombe (strain 972 / ATCC 24843) (Fission yeast)).